The sequence spans 340 residues: Integral membrane protein SED5 (340 aa).

The Cytoplasmic segment spans residues 1–319 (MNIKDRTSEF…KYFDRIKSNR (319 aa)). The segment at 31-51 (RLQEKESENFANNTTGNGKSV) is disordered. Residues 39–51 (NFANNTTGNGKSV) are compositionally biased toward polar residues. Residues 146-173 (LNTQMKNISGSFKDVLEERQRLEMANKD) are a coiled coil. The tract at residues 180–231 (TDTGHAPADDQTQSNHAADLTTYNNSNPFMTSLLDESSEKNNNSSNQGELSF) is disordered. Residues 189 to 209 (DQTQSNHAADLTTYNNSNPFM) are compositionally biased toward polar residues. The t-SNARE coiled-coil homology domain maps to 249-311 (NVYLQERNRA…SGAQRELLKY (63 aa)). Residues 320–340 (WLAAKVFFIIFVFFVIWVLVN) traverse the membrane as a helical; Anchor for type IV membrane protein segment.

This sequence belongs to the syntaxin family. As to quaternary structure, interacts with SLY1, STF1, SFB3 and GOS1.

The protein resides in the membrane. Its subcellular location is the golgi apparatus membrane. Its function is as follows. Required for vesicular transport between the endoplasmic reticulum and the Golgi complex. Acts as a target organelle soluble NSF attachment protein receptor (t-SNARE). The chain is Integral membrane protein SED5 (SED5) from Saccharomyces cerevisiae (strain ATCC 204508 / S288c) (Baker's yeast).